Here is a 365-residue protein sequence, read N- to C-terminus: Chaperone protein DnaJ (365 aa).

The J domain maps to 5 to 71 (DFYEILGIAK…QKRQAYDQFG (67 aa)). A CR-type zinc finger spans residues 128-206 (GTTVKIRIPK…CHGKGVVHKQ (79 aa)). 8 residues coordinate Zn(2+): Cys141, Cys144, Cys158, Cys161, Cys180, Cys183, Cys194, and Cys197. 4 CXXCXGXG motif repeats span residues 141–148 (CDTCSGTG), 158–165 (CLTCGGAG), 180–187 (CNACSGTG), and 194–201 (CNNCHGKG).

Belongs to the DnaJ family. In terms of assembly, homodimer. Zn(2+) serves as cofactor.

The protein localises to the cytoplasm. Functionally, participates actively in the response to hyperosmotic and heat shock by preventing the aggregation of stress-denatured proteins and by disaggregating proteins, also in an autonomous, DnaK-independent fashion. Unfolded proteins bind initially to DnaJ; upon interaction with the DnaJ-bound protein, DnaK hydrolyzes its bound ATP, resulting in the formation of a stable complex. GrpE releases ADP from DnaK; ATP binding to DnaK triggers the release of the substrate protein, thus completing the reaction cycle. Several rounds of ATP-dependent interactions between DnaJ, DnaK and GrpE are required for fully efficient folding. Also involved, together with DnaK and GrpE, in the DNA replication of plasmids through activation of initiation proteins. This Vesicomyosocius okutanii subsp. Calyptogena okutanii (strain HA) protein is Chaperone protein DnaJ.